A 151-amino-acid polypeptide reads, in one-letter code: Ribosomal RNA large subunit methyltransferase H (151 aa).

S-adenosyl-L-methionine is bound by residues leucine 73, glycine 100, and 119 to 124 (LTKLTL).

The protein belongs to the RNA methyltransferase RlmH family. In terms of assembly, homodimer.

It localises to the cytoplasm. The enzyme catalyses pseudouridine(1915) in 23S rRNA + S-adenosyl-L-methionine = N(3)-methylpseudouridine(1915) in 23S rRNA + S-adenosyl-L-homocysteine + H(+). Specifically methylates the pseudouridine at position 1915 (m3Psi1915) in 23S rRNA. The polypeptide is Ribosomal RNA large subunit methyltransferase H (Campylobacter hominis (strain ATCC BAA-381 / DSM 21671 / CCUG 45161 / LMG 19568 / NCTC 13146 / CH001A)).